A 148-amino-acid polypeptide reads, in one-letter code: Hemoglobin subunit beta-2 (148 aa).

Residues 3 to 148 (EWTDAERTAI…VVSALCRQYH (146 aa)) enclose the Globin domain. Residues His64 and His93 each contribute to the heme b site.

Heterotetramer of two alpha chains and two beta chains. As to expression, red blood cells.

In terms of biological role, involved in oxygen transport from gills to the various peripheral tissues. This Danio rerio (Zebrafish) protein is Hemoglobin subunit beta-2 (ba2).